Reading from the N-terminus, the 108-residue chain is UPF0060 membrane protein YnfA (108 aa).

Residues 1-5 (MLKTT) are Periplasmic-facing. The helical transmembrane segment at 6–26 (LLFFVTALCEIIGCFLTWLWI) threads the bilayer. Residues 27–30 (KRGA) lie on the Cytoplasmic side of the membrane. Residues 31–51 (SVWWLLPAAASLALFVWLLTL) traverse the membrane as a helical segment. The Periplasmic segment spans residues 52–60 (HPAASGRVY). The chain crosses the membrane as a helical span at residues 61-81 (AAYGGVYVCTALLWLRVVDGV). At 82–84 (RLT) the chain is on the cytoplasmic side. Residues 85–105 (VYDWCGAPIALCGMLIIVVGW) traverse the membrane as a helical segment. At 106–108 (GRT) the chain is on the periplasmic side.

It belongs to the UPF0060 family.

Its subcellular location is the cell inner membrane. The sequence is that of UPF0060 membrane protein YnfA from Salmonella dublin (strain CT_02021853).